We begin with the raw amino-acid sequence, 267 residues long: Translation initiation factor 2 subunit alpha (267 aa).

Residues 10-81 (GELVVGKVDD…SAQQIDLSLK (72 aa)) form the S1 motif domain.

This sequence belongs to the eIF-2-alpha family. Heterotrimer composed of an alpha, a beta and a gamma chain.

EIF-2 functions in the early steps of protein synthesis by forming a ternary complex with GTP and initiator tRNA. This chain is Translation initiation factor 2 subunit alpha, found in Halobacterium salinarum (strain ATCC 29341 / DSM 671 / R1).